A 234-amino-acid polypeptide reads, in one-letter code: uncharacterized protein (234 aa).

Transmembrane regions (helical) follow at residues 5 to 23, 38 to 60, 73 to 92, 127 to 149, 170 to 192, and 197 to 217; these read LFYI…LWSF, IPTA…GFWV, AHIQ…AHGW, AITL…YIWL, GVAI…TVIS, and TQAG…ALAF.

The protein resides in the cell membrane. This is an uncharacterized protein from Archaeoglobus fulgidus (strain ATCC 49558 / DSM 4304 / JCM 9628 / NBRC 100126 / VC-16).